Here is a 253-residue protein sequence, read N- to C-terminus: Methionine aminopeptidase (253 aa).

Histidine 78 is a binding site for substrate. Residues aspartate 95, aspartate 106, and histidine 169 each coordinate a divalent metal cation. Histidine 176 lines the substrate pocket. A divalent metal cation-binding residues include glutamate 206 and glutamate 237.

It belongs to the peptidase M24A family. Methionine aminopeptidase type 1 subfamily. As to quaternary structure, monomer. Co(2+) is required as a cofactor. Zn(2+) serves as cofactor. It depends on Mn(2+) as a cofactor. Requires Fe(2+) as cofactor.

The enzyme catalyses Release of N-terminal amino acids, preferentially methionine, from peptides and arylamides.. Removes the N-terminal methionine from nascent proteins. The N-terminal methionine is often cleaved when the second residue in the primary sequence is small and uncharged (Met-Ala-, Cys, Gly, Pro, Ser, Thr, or Val). Requires deformylation of the N(alpha)-formylated initiator methionine before it can be hydrolyzed. The sequence is that of Methionine aminopeptidase from Helicobacter pylori (strain ATCC 700392 / 26695) (Campylobacter pylori).